A 273-amino-acid chain; its full sequence is Orotidine 5'-phosphate decarboxylase (273 aa).

Lys-95 acts as the Proton donor in catalysis.

The protein belongs to the OMP decarboxylase family. Type 2 subfamily.

It catalyses the reaction orotidine 5'-phosphate + H(+) = UMP + CO2. It participates in pyrimidine metabolism; UMP biosynthesis via de novo pathway; UMP from orotate: step 2/2. This chain is Orotidine 5'-phosphate decarboxylase, found in Bordetella bronchiseptica (strain ATCC BAA-588 / NCTC 13252 / RB50) (Alcaligenes bronchisepticus).